A 249-amino-acid polypeptide reads, in one-letter code: 5'-nucleotidase SurE (249 aa).

Asp-8, Asp-9, Ser-39, and Asn-91 together coordinate a divalent metal cation.

It belongs to the SurE nucleotidase family. A divalent metal cation serves as cofactor.

Its subcellular location is the cytoplasm. The enzyme catalyses a ribonucleoside 5'-phosphate + H2O = a ribonucleoside + phosphate. Functionally, nucleotidase that shows phosphatase activity on nucleoside 5'-monophosphates. The chain is 5'-nucleotidase SurE from Azotobacter vinelandii (strain DJ / ATCC BAA-1303).